The primary structure comprises 1431 residues: MHALHQTLLPSSSIHHSLFLPHFTPSTIYPLPKPPAALDTLDVKVIGNLVVAGAEVLRVFEIREESVPIIENVKLEEDVAEGEKDVQMEEVGDGFFDDGHAERAPLKYQTTRRLHLLTQHELNGTITGLAATRTLESTIDGLDRLIVSFKDAKMALLEWSRGDIATVSLHTYERCSQMNTGDLQSYVPLLRTDPLSRLAVLTLPEDSLAVLPLIQEQSELDPLSEGFSRDAPYSPSFVLSLSDMSITIKNIQDLLFLPGFHSPTIALLFSPMHTWSGRLQTVKDTFCLEIRTFDLSSGTSYPLLTSVSGLPSDSLYLVACPSELGGIVLVTSTGIVHVDQGGRVTAACVNAWWSRITSLKCSMASVSQKLTLEGSRCVFVTPHDMLLVLQNGAVHQVRFSMEGRAVGVIEVLDKGCVVPPPSDLTVAGDGAVFVGSAEGDSWLAKVNVVRQVVERSEKKKDEMEVDWDEDLYGDINDAALDEKAQELFGPAAITLSPYDILTGVGKIMDIEFGIAASDQGLRTYPQLVAVSGGSRNSTINVFRRGIPITKRRRFNELLNAEGVWFLPIDRQTGQKFKDIPEAERATILLSSEGNATRVFALFSKPTPQQIGRLDGKTLSAAPFFQRSCILRVSPLEVVLLDNNGKIIQTVCPRGDGPKIVNASISDPFVIIRRADDSVTFFVGDTVARTVAEAPIVSEGESPVCQAVEVFTDTTGVYRTFEPSKSESSEPISHQIDSENKPNITNGINGTTARSARQTQLTPQQIKRLQEQEPAITTEAPSMETAINSPHGTQWLALVTRGGELQIRSLPDLQIVLQSEGLASSAPSFTDDLGENPGYVLGEKREEGEEEDEIIQMVFCPIGKGTVRQHLLALHHSGRLNAYEAQPRFTVDASSHSRRSLAVRFRKVHTQLLPISGGVGTTNGNARLPYTIVPFNNIEGLTGAFITGEKPHWIISSEAHPLRAFALKQAAMAFGKTTHLGGKGEYFIRIEDGSFICYLPPTLNTDFAIPCDRYQMERAYTNITFDPTSAHYVGAASIEVPFQAYDEEGEIQLGPDGPDLIPPTNQRSTLELFSQGSDPWKVIDGYEFDQNEEVMSMESVNLESPGAPGGYRDFIAVGTGFNFGEDRATRGNTYIFEILQTVGPQGGGGPGSVPGWKLVKRTKDPARHPVNAVNHINGYLLNTNGPKLYVKGLDYDSQLMGLAFLDIQLYATTVKVFKNFMLIGDLCKSFWFVSLQEDPYKFTTISKDLQHVSVVTADFLVHDGQVTFISSDRNGDMRMLDFDPTDPDSLNGERLMLRTEYHAGSAATVSKVIARRKTAEEEFAPQTQIIYATADGALTTVVSVKDARFKRLQLVSDQLVRNAQHVAGLNPRAFRTVRNDLLPRPLSKGILDGQLLNQFALQPIGRQKEMMRQIGTDAVTVASDLQALGGFW.

The tract at residues glutamate 721–glutamine 759 is disordered. Residues lysine 740–glutamine 759 show a composition bias toward polar residues.

The protein belongs to the CFT1 family.

It is found in the nucleus. RNA-binding component of the cleavage and polyadenylation factor (CPF) complex, which plays a key role in polyadenylation-dependent pre-mRNA 3'-end formation and cooperates with cleavage factors including the CFIA complex and NAB4/CFIB. Involved in poly(A) site recognition. May be involved in coupling transcription termination and mRNA 3'-end formation. The sequence is that of Protein CFT1 (CFT1) from Cryptococcus neoformans var. neoformans serotype D (strain B-3501A) (Filobasidiella neoformans).